The chain runs to 434 residues: Lipoyl synthase, mitochondrial (434 aa).

The N-terminal 31 residues, 1-31 (MAASARGLRTLQSAHSSTTVPRLQLAVSRCY), are a transit peptide targeting the mitochondrion. The segment covering 34–54 (TTSPDPPITNSSNSSNSTPTP) has biased composition (low complexity). Residues 34-55 (TTSPDPPITNSSNSSNSTPTPK) are disordered. The [4Fe-4S] cluster site is built by Cys144, Cys149, Cys155, Cys175, Cys179, Cys182, and Ser390. One can recognise a Radical SAM core domain in the interval 158–379 (GSSKSAATAT…KERALEMGFL (222 aa)).

This sequence belongs to the radical SAM superfamily. Lipoyl synthase family. [4Fe-4S] cluster is required as a cofactor.

The protein localises to the mitochondrion. It catalyses the reaction [[Fe-S] cluster scaffold protein carrying a second [4Fe-4S](2+) cluster] + N(6)-octanoyl-L-lysyl-[protein] + 2 oxidized [2Fe-2S]-[ferredoxin] + 2 S-adenosyl-L-methionine + 4 H(+) = [[Fe-S] cluster scaffold protein] + N(6)-[(R)-dihydrolipoyl]-L-lysyl-[protein] + 4 Fe(3+) + 2 hydrogen sulfide + 2 5'-deoxyadenosine + 2 L-methionine + 2 reduced [2Fe-2S]-[ferredoxin]. Its pathway is protein modification; protein lipoylation via endogenous pathway; protein N(6)-(lipoyl)lysine from octanoyl-[acyl-carrier-protein]: step 2/2. Functionally, catalyzes the radical-mediated insertion of two sulfur atoms into the C-6 and C-8 positions of the octanoyl moiety bound to the lipoyl domains of lipoate-dependent enzymes, thereby converting the octanoylated domains into lipoylated derivatives. The polypeptide is Lipoyl synthase, mitochondrial (Paracoccidioides brasiliensis (strain Pb03)).